A 305-amino-acid polypeptide reads, in one-letter code: Ankyrin repeat domain-containing protein 23 (305 aa).

Positions 41–72 (QEAVAREKLKLEEEKKKKLERFNSTRFNLDNL) form a coiled coil. Basic residues predominate over residues 83 to 92 (KKRLRHRVPP). The tract at residues 83–104 (KKRLRHRVPPRKPEPLVKPQSQ) is disordered. ANK repeat units follow at residues 143 to 172 (LHRTALHWACLKGHSQLVNKLLVAGATVDA), 176 to 205 (LDRTPVFWACRGGHLVILKQLLNQGARVNA), 209 to 238 (IGSTPLHVAVRTRHPDCLEHLIECGAHLNA), and 242 to 271 (EGDTALHEAVRHGSYKAMKLLLLYGAELGV). The interval 178–195 (RTPVFWACRGGHLVILKQ) is interaction with TTN.

As to quaternary structure, interacts with titin/TTN and MYPN. As to expression, mainly expressed in heart, skeletal muscle and brown adipose tissues.

The protein localises to the nucleus. Its function is as follows. May be involved in the energy metabolism. Could be a molecular link between myofibrillar stretch-induced signaling pathways and muscle gene expression. The protein is Ankyrin repeat domain-containing protein 23 (ANKRD23) of Homo sapiens (Human).